The following is a 496-amino-acid chain: DNA-dependent metalloprotease SPRTN (496 aa).

Met-1 is subject to N-acetylmethionine. In terms of domain architecture, SprT-like spans 45 to 212 (LQALFLQFND…KTCGGTYIKI (168 aa)). His-111 is a binding site for Zn(2+). Glu-112 is a catalytic residue. Zn(2+) contacts are provided by His-115 and His-130. An N6-acetyllysine modification is found at Lys-230. The short motif at 253 to 261 (FSGKGYVLG) is the SHP-box element. Ser-268 carries the phosphoserine modification. A Glycyl lysine isopeptide (Lys-Gly) (interchain with G-Cter in SUMO2) cross-link involves residue Lys-303. The short motif at 326–333 (QSVLSSYF) is the PIP-box element. Residue Lys-342 forms a Glycyl lysine isopeptide (Lys-Gly) (interchain with G-Cter in SUMO2); alternate linkage. Residue Lys-342 forms a Glycyl lysine isopeptide (Lys-Gly) (interchain with G-Cter in ubiquitin); alternate linkage. The tract at residues 346-459 (NVNGSPVKSG…STPRSSGGQR (114 aa)) is disordered. A Glycyl lysine isopeptide (Lys-Gly) (interchain with G-Cter in SUMO2) cross-link involves residue Lys-361. Positions 382–403 (SSKVTAPASATVTSAAGTSAAI) are enriched in low complexity. Residue Ser-383 is modified to Phosphoserine. The Nuclear localization signal motif lies at 412–423 (DQFLNKRPRLED). Polar residues-rich tracts occupy residues 426–437 (ALNNIKEQTQSG) and 445–457 (RPTA…SSGG). A Glycyl lysine isopeptide (Lys-Gly) (interchain with G-Cter in SUMO2) cross-link involves residue Lys-431. Residues 461–488 (LVNCPVCQGVVLESQINEHLDRCLEGSK) form a UBZ4-type zinc finger. The Zn(2+) site is built by Cys-464, Cys-467, His-479, and Cys-483.

This sequence belongs to the Spartan family. Homodimer. Interacts (VIA PIP-box) with PCNA (when ubiquitinated). Interacts (via its SHP-box) with VCP/p97. Interacts with RAD18. Interacts with KCTD13 and POLD3. The cofactor is Zn(2+). Post-translationally, autocatalytically cleaved in response to double-stranded DNA-binding: autocatalytic cleavage takes place in trans and leads to inactivation. Monoubiquitinated; monoubiquitination promotes exclusion from chromatin. Deubiquitinated by VCPIP1: deubiquitination is required for subsequent acetylation and recruitment to chromatin and DNA damage sites. In terms of processing, acetylated following deubiquitination by VCPIP1, leading to recruitment to chromatin and DNA damage sites. Post-translationally, phosphorylation by CHEK1 promotes recruitment to chromatin.

Its subcellular location is the nucleus. It is found in the chromosome. With respect to regulation, DNA-binding activates the protease activity: single-stranded DNA-binding specifically activates ability to cleave covalent DNA-protein cross-links (DPCs). In contrast, double-stranded DNA-binding specifically activates autocatalytic cleavage, and subsequent inactivation. Its function is as follows. DNA-dependent metalloendopeptidase that mediates the proteolytic cleavage of covalent DNA-protein cross-links (DPCs) during DNA synthesis, thereby playing a key role in maintaining genomic integrity. DPCs are highly toxic DNA lesions that interfere with essential chromatin transactions, such as replication and transcription, and which are induced by reactive agents, such as UV light or formaldehyde. Associates with the DNA replication machinery and specifically removes DPCs during DNA synthesis. Catalyzes proteolytic cleavage of the HMCES DNA-protein cross-link following unfolding by the BRIP1/FANCJ helicase. Acts as a pleiotropic protease for DNA-binding proteins cross-linked with DNA, such as TOP1, TOP2A, histones H3 and H4. Mediates degradation of DPCs that are not ubiquitinated, while it is not able to degrade ubiquitinated DPCs. SPRTN activation requires polymerase collision with DPCs followed by helicase bypass of DPCs. Involved in recruitment of VCP/p97 to sites of DNA damage. Also acts as an activator of CHEK1 during normal DNA replication by mediating proteolytic cleavage of CHEK1, thereby promoting CHEK1 removal from chromatin and subsequent activation. Does not activate CHEK1 in response to DNA damage. May also act as a 'reader' of ubiquitinated PCNA: recruited to sites of UV damage and interacts with ubiquitinated PCNA and RAD18, the E3 ubiquitin ligase that monoubiquitinates PCNA. Facilitates chromatin association of RAD18 and is required for efficient PCNA monoubiquitination, promoting a feed-forward loop to enhance PCNA ubiquitination and translesion DNA synthesis. The protein is DNA-dependent metalloprotease SPRTN of Rattus norvegicus (Rat).